The primary structure comprises 383 residues: Opsin Rh3 (383 aa).

Residues 1-57 (MESGNVSSSLFGNVSTALRPEARLSAETRLLGWNVPPEELRHIPEHWLTYPEPPESM) lie on the Extracellular side of the membrane. N-linked (GlcNAc...) asparagine glycosylation occurs at Asn13. A helical membrane pass occupies residues 58–82 (NYLLGTLYIFFTLMSMLGNGLVIWV). The Cytoplasmic segment spans residues 83–94 (FSAAKSLRTPSN). Residues 95 to 119 (ILVINLAFCDFMMMVKTPIFIYNSF) traverse the membrane as a helical segment. Over 120-133 (HQGYALGHLGCQIF) the chain is Extracellular. A disulfide bridge links Cys130 with Cys207. A helical membrane pass occupies residues 134–153 (GIIGSYTGIAAGATNAFIAY). At 154–171 (DRFNVITRPMEGKMTHGK) the chain is on the cytoplasmic side. The helical transmembrane segment at 172 to 196 (AIAMIIFIYMYATPWVVACYTETWG) threads the bilayer. The Extracellular segment spans residues 197–220 (RFVPEGYLTSCTFDYLTDNFDTRL). A helical transmembrane segment spans residues 221 to 248 (FVACIFFFSFVCPTTMITYYYSQIVGHV). Over 249–284 (FSHEKALRDQAKKMNVESLRSNVDKNKETAEIRIAK) the chain is Cytoplasmic. The chain crosses the membrane as a helical span at residues 285–308 (AAITICFLFFCSWTPYGVMSLIGA). The Extracellular segment spans residues 309-316 (FGDKTLLT). The helical transmembrane segment at 317–341 (PGATMIPACACKMVACIDPFVYAIS) threads the bilayer. Lys328 is modified (N6-(retinylidene)lysine). The Cytoplasmic portion of the chain corresponds to 342–383 (HPRYRMELQKRCPWLALNEKAPESSAVASTSTTQEPQQTTAA). The disordered stretch occupies residues 362-383 (APESSAVASTSTTQEPQQTTAA). Over residues 369–383 (ASTSTTQEPQQTTAA) the composition is skewed to low complexity.

It belongs to the G-protein coupled receptor 1 family. Opsin subfamily. Post-translationally, phosphorylated on some or all of the serine and threonine residues present in the C-terminal region.

It localises to the membrane. Its function is as follows. Visual pigments are the light-absorbing molecules that mediate vision. They consist of an apoprotein, opsin, covalently linked to cis-retinal. The chain is Opsin Rh3 (Rh3) from Drosophila melanogaster (Fruit fly).